The chain runs to 403 residues: Phosphoglycerate kinase (403 aa).

Residues 24–26, Arg39, 62–65, Arg121, and Arg161 each bind substrate; these read DLN and HLGR. Residues Lys211, Gly299, Glu330, and 359–362 contribute to the ATP site; that span reads GGDS.

The protein belongs to the phosphoglycerate kinase family. In terms of assembly, monomer.

It is found in the cytoplasm. It catalyses the reaction (2R)-3-phosphoglycerate + ATP = (2R)-3-phospho-glyceroyl phosphate + ADP. The protein operates within carbohydrate degradation; glycolysis; pyruvate from D-glyceraldehyde 3-phosphate: step 2/5. This Rhodococcus opacus (strain B4) protein is Phosphoglycerate kinase.